The primary structure comprises 547 residues: Chaperonin GroEL 1 (547 aa).

ATP-binding positions include 30–33 (TLGP), Lys51, 87–91 (DGTTT), Gly415, and Asp496.

It belongs to the chaperonin (HSP60) family. Forms a cylinder of 14 subunits composed of two heptameric rings stacked back-to-back. Interacts with the co-chaperonin GroES.

The protein resides in the cytoplasm. It catalyses the reaction ATP + H2O + a folded polypeptide = ADP + phosphate + an unfolded polypeptide.. In terms of biological role, together with its co-chaperonin GroES, plays an essential role in assisting protein folding. The GroEL-GroES system forms a nano-cage that allows encapsulation of the non-native substrate proteins and provides a physical environment optimized to promote and accelerate protein folding. The protein is Chaperonin GroEL 1 of Bradyrhizobium sp. (strain BTAi1 / ATCC BAA-1182).